The sequence spans 264 residues: Small ribosomal subunit protein eS1 (264 aa).

N6-acetyllysine; alternate is present on Lys-34. Lys-34 is covalently cross-linked (Glycyl lysine isopeptide (Lys-Gly) (interchain with G-Cter in SUMO2); alternate). Lys-56 bears the N6-acetyllysine mark. Tyr-155 bears the ADP-ribosyltyrosine mark. The segment at 232 to 264 (HGEGGSSGKTTGDETGAKVERADGYEPPVQESV) is disordered. Ser-237 carries the post-translational modification Phosphoserine. The span at 242–255 (TGDETGAKVERADG) shows a compositional bias: basic and acidic residues. Lys-249 is modified (N6-acetyllysine; alternate). A Glycyl lysine isopeptide (Lys-Gly) (interchain with G-Cter in SUMO2); alternate cross-link involves residue Lys-249. Tyr-256 is subject to Phosphotyrosine. Ser-263 is modified (phosphoserine).

This sequence belongs to the eukaryotic ribosomal protein eS1 family. In terms of assembly, component of the small ribosomal subunit. Mature ribosomes consist of a small (40S) and a large (60S) subunit. The 40S subunit contains about 33 different proteins and 1 molecule of RNA (18S). The 60S subunit contains about 49 different proteins and 3 molecules of RNA (28S, 5.8S and 5S). Identified in a IGF2BP1-dependent mRNP granule complex containing untranslated mRNAs. Binds with high affinity to IPO4. Interacts with DDIT3. Part of the small subunit (SSU) processome, composed of more than 70 proteins and the RNA chaperone small nucleolar RNA (snoRNA) U3. In terms of processing, the protein designated S3b has the same amino acid sequence as S3a except that it lacks the C-terminal 12 residues. It is probable that S3a is converted by proteolysis, either physiologically or fortuitously, to S3b. ADP-ribosylated at Tyr-155 by PARP1 in presence of HPF1.

The protein resides in the cytoplasm. It localises to the nucleus. It is found in the nucleolus. Its function is as follows. Component of the small ribosomal subunit. The ribosome is a large ribonucleoprotein complex responsible for the synthesis of proteins in the cell. Part of the small subunit (SSU) processome, first precursor of the small eukaryotic ribosomal subunit. During the assembly of the SSU processome in the nucleolus, many ribosome biogenesis factors, an RNA chaperone and ribosomal proteins associate with the nascent pre-rRNA and work in concert to generate RNA folding, modifications, rearrangements and cleavage as well as targeted degradation of pre-ribosomal RNA by the RNA exosome. May play a role during erythropoiesis through regulation of transcription factor DDIT3. In Rattus norvegicus (Rat), this protein is Small ribosomal subunit protein eS1 (Rps3a).